A 93-amino-acid chain; its full sequence is uncharacterized protein (93 aa).

This is an uncharacterized protein from Homo sapiens (Human).